The primary structure comprises 830 residues: Prolactin receptor (830 aa).

The signal sequence occupies residues 1–23 (MKQKLRSSVQIILLFALTAVGLT). Residues 24–439 (GQSYPGKPKI…QIPTDFRIKD (416 aa)) lie on the Extracellular side of the membrane. 4 Fibronectin type-III domains span residues 30 to 128 (KPKI…VQPD), 129 to 228 (APVN…IPNG), 231 to 331 (PPEK…IVQT), and 333 to 434 (PPVN…IPTD). A disulfide bridge connects residues Cys-36 and Cys-46. An N-linked (GlcNAc...) asparagine glycan is attached at Asn-59. Cys-75 and Cys-86 are disulfide-bonded. Residues Asn-91, Asn-100, Asn-112, Asn-132, Asn-263, Asn-304, Asn-316, and Asn-336 are each glycosylated (N-linked (GlcNAc...) asparagine). Zn(2+) contacts are provided by Asp-415 and His-417. A WSXWS motif motif is present at residues 420–424 (WSEWS). Residues 440 to 460 (MVVWIIVGVLSSLICLVMSWT) traverse the membrane as a helical segment. The Cytoplasmic segment spans residues 461 to 830 (MVLKGYRMIA…DPSSFIPAFK (370 aa)). Residues 472–480 (ILPPVPGPK) carry the Box 1 motif motif.

It belongs to the type I cytokine receptor family. Type 1 subfamily.

The protein localises to the membrane. This is a receptor for the anterior pituitary hormone prolactin. In Columba livia (Rock dove), this protein is Prolactin receptor (PRLR).